The chain runs to 547 residues: CDK5RAP1-like protein (547 aa).

The region spanning 79 to 194 is the MTTase N-terminal domain; sequence RTVCYVTYGC…LPRLVAVAAG (116 aa). Positions 88, 124, 157, 232, 236, and 239 each coordinate [4Fe-4S] cluster. The 258-residue stretch at 218-475 folds into the Radical SAM core domain; that stretch reads DSASKTAFIS…TTVFREEALK (258 aa). A TRAM domain is found at 478–543; it reads QALIGSEQTV…SQTLKAQLIG (66 aa).

Belongs to the methylthiotransferase family. MiaB subfamily. The cofactor is [4Fe-4S] cluster.

In terms of biological role, potential regulator of CDK5 activity. The chain is CDK5RAP1-like protein from Caenorhabditis elegans.